A 706-amino-acid chain; its full sequence is Fatty acid oxidation complex subunit alpha (706 aa).

The segment at 1 to 188 (MEKTFNLTRR…KMGLVNDVVP (188 aa)) is enoyl-CoA hydratase. Residues 308-706 (RKVKKAVILG…TMARENVSFF (399 aa)) form a 3-hydroxyacyl-CoA dehydrogenase region.

The protein in the N-terminal section; belongs to the enoyl-CoA hydratase/isomerase family. This sequence in the central section; belongs to the 3-hydroxyacyl-CoA dehydrogenase family. As to quaternary structure, heterotetramer of two alpha chains (FadJ) and two beta chains (FadI).

It localises to the cytoplasm. It carries out the reaction a (3S)-3-hydroxyacyl-CoA = a (2E)-enoyl-CoA + H2O. The catalysed reaction is a 4-saturated-(3S)-3-hydroxyacyl-CoA = a (3E)-enoyl-CoA + H2O. The enzyme catalyses a (3S)-3-hydroxyacyl-CoA + NAD(+) = a 3-oxoacyl-CoA + NADH + H(+). It catalyses the reaction (3S)-3-hydroxybutanoyl-CoA = (3R)-3-hydroxybutanoyl-CoA. Its pathway is lipid metabolism; fatty acid beta-oxidation. Functionally, catalyzes the formation of a hydroxyacyl-CoA by addition of water on enoyl-CoA. Also exhibits 3-hydroxyacyl-CoA epimerase and 3-hydroxyacyl-CoA dehydrogenase activities. In Shewanella sp. (strain W3-18-1), this protein is Fatty acid oxidation complex subunit alpha.